The sequence spans 140 residues: Small ribosomal subunit protein uS12 (140 aa).

The residue at position 59 (P59) is a Hydroxyproline.

Belongs to the universal ribosomal protein uS12 family.

This Encephalitozoon cuniculi (strain GB-M1) (Microsporidian parasite) protein is Small ribosomal subunit protein uS12 (RPS23).